Consider the following 113-residue polypeptide: Cell cycle protein GpsB (113 aa).

Residues 36 to 68 (LDMVIKDYSTFTQEIEALQAENIRLVQELDNAP) adopt a coiled-coil conformation.

The protein belongs to the GpsB family. Forms polymers through the coiled coil domains. Interacts with PBP1, MreC and EzrA.

It localises to the cytoplasm. Its function is as follows. Divisome component that associates with the complex late in its assembly, after the Z-ring is formed, and is dependent on DivIC and PBP2B for its recruitment to the divisome. Together with EzrA, is a key component of the system that regulates PBP1 localization during cell cycle progression. Its main role could be the removal of PBP1 from the cell pole after pole maturation is completed. Also contributes to the recruitment of PBP1 to the division complex. Not essential for septum formation. The polypeptide is Cell cycle protein GpsB (Listeria innocua serovar 6a (strain ATCC BAA-680 / CLIP 11262)).